Here is a 231-residue protein sequence, read N- to C-terminus: 2-hydroxy-3-keto-5-methylthiopentenyl-1-phosphate phosphatase (231 aa).

It belongs to the HAD-like hydrolase superfamily. MtnX family.

The enzyme catalyses 2-hydroxy-5-methylsulfanyl-3-oxopent-1-enyl phosphate + H2O = 1,2-dihydroxy-5-(methylsulfanyl)pent-1-en-3-one + phosphate. Its pathway is amino-acid biosynthesis; L-methionine biosynthesis via salvage pathway; L-methionine from S-methyl-5-thio-alpha-D-ribose 1-phosphate: step 4/6. Functionally, dephosphorylates 2-hydroxy-3-keto-5-methylthiopentenyl-1-phosphate (HK-MTPenyl-1-P) yielding 1,2-dihydroxy-3-keto-5-methylthiopentene (DHK-MTPene). The polypeptide is 2-hydroxy-3-keto-5-methylthiopentenyl-1-phosphate phosphatase (Bacillus pumilus (strain SAFR-032)).